A 32-amino-acid chain; its full sequence is Photosystem II reaction center protein T (32 aa).

Residues 3 to 23 (AFAYVLILTLAVVTLFFAVAF) traverse the membrane as a helical segment.

Belongs to the PsbT family. PSII is composed of 1 copy each of membrane proteins PsbA, PsbB, PsbC, PsbD, PsbE, PsbF, PsbH, PsbI, PsbJ, PsbK, PsbL, PsbM, PsbT, PsbX, PsbY, Psb30/Ycf12, peripheral proteins PsbO, CyanoQ (PsbQ), PsbU, PsbV and a large number of cofactors. It forms dimeric complexes.

It localises to the cellular thylakoid membrane. Found at the monomer-monomer interface of the photosystem II (PS II) dimer, plays a role in assembly and dimerization of PSII. PSII is a light-driven water plastoquinone oxidoreductase, using light energy to abstract electrons from H(2)O, generating a proton gradient subsequently used for ATP formation. In Prochlorococcus marinus (strain MIT 9301), this protein is Photosystem II reaction center protein T.